The following is a 295-amino-acid chain: Pyridoxal 5'-phosphate synthase subunit PdxS (295 aa).

Asp25 lines the D-ribose 5-phosphate pocket. Lys82 acts as the Schiff-base intermediate with D-ribose 5-phosphate in catalysis. Gly154 contacts D-ribose 5-phosphate. Arg166 contributes to the D-glyceraldehyde 3-phosphate binding site. Residues Gly215 and 236 to 237 (GS) contribute to the D-ribose 5-phosphate site.

Belongs to the PdxS/SNZ family. As to quaternary structure, in the presence of PdxT, forms a dodecamer of heterodimers.

The enzyme catalyses aldehydo-D-ribose 5-phosphate + D-glyceraldehyde 3-phosphate + L-glutamine = pyridoxal 5'-phosphate + L-glutamate + phosphate + 3 H2O + H(+). It functions in the pathway cofactor biosynthesis; pyridoxal 5'-phosphate biosynthesis. Functionally, catalyzes the formation of pyridoxal 5'-phosphate from ribose 5-phosphate (RBP), glyceraldehyde 3-phosphate (G3P) and ammonia. The ammonia is provided by the PdxT subunit. Can also use ribulose 5-phosphate and dihydroxyacetone phosphate as substrates, resulting from enzyme-catalyzed isomerization of RBP and G3P, respectively. The polypeptide is Pyridoxal 5'-phosphate synthase subunit PdxS (Macrococcus caseolyticus (strain JCSC5402) (Macrococcoides caseolyticum)).